A 280-amino-acid chain; its full sequence is Polyamine aminopropyltransferase 1 (280 aa).

The PABS domain occupies 3 to 237 (DIVFIERDPY…YWWTFSIASK (235 aa)). Gln-33 is an S-methyl-5'-thioadenosine binding site. Residues His-64 and Asp-88 each coordinate spermidine. Residues Asp-108 and 139–140 (DG) contribute to the S-methyl-5'-thioadenosine site. The active-site Proton acceptor is Asp-157. 157–160 (DSTD) provides a ligand contact to spermidine.

The protein belongs to the spermidine/spermine synthase family. In terms of assembly, homodimer or homotetramer.

The protein resides in the cytoplasm. The catalysed reaction is S-adenosyl 3-(methylsulfanyl)propylamine + putrescine = S-methyl-5'-thioadenosine + spermidine + H(+). It functions in the pathway amine and polyamine biosynthesis; spermidine biosynthesis; spermidine from putrescine: step 1/1. In terms of biological role, catalyzes the irreversible transfer of a propylamine group from the amino donor S-adenosylmethioninamine (decarboxy-AdoMet) to putrescine (1,4-diaminobutane) to yield spermidine. This is Polyamine aminopropyltransferase 1 from Aquifex aeolicus (strain VF5).